A 354-amino-acid chain; its full sequence is Galactoside alpha-(1,2)-fucosyltransferase 2 (354 aa).

The Cytoplasmic segment spans residues 1–22 (MRFAPDYVLCPPTATRRLRATH). Residues 23–43 (PSVSTIYFLFTIFVVSTVFHC) traverse the membrane as a helical; Signal-anchor for type II membrane protein segment. Over 44-354 (HQRLALVPAP…NMGRALWSGL (311 aa)) the chain is Lumenal. Residues asparagine 197, asparagine 291, and asparagine 317 are each glycosylated (N-linked (GlcNAc...) asparagine).

Belongs to the glycosyltransferase 11 family. Salivary and lactating mammary glands.

It localises to the golgi apparatus. The protein resides in the golgi stack membrane. It carries out the reaction a beta-D-galactosyl-(1-&gt;3)-N-acetyl-beta-D-glucosaminyl derivative + GDP-beta-L-fucose = an alpha-L-Fuc-(1-&gt;2)-beta-D-Gal-(1-&gt;3)-beta-D-GlcNAc derivative + GDP + H(+). It catalyses the reaction a beta-D-galactosyl-(1-&gt;4)-N-acetyl-beta-D-glucosaminyl derivative + GDP-beta-L-fucose = an alpha-L-Fuc-(1-&gt;2)-beta-D-Gal-(1-&gt;4)-beta-D-GlcNAc derivative + GDP + H(+). The enzyme catalyses a neolactoside nLc4Cer + GDP-beta-L-fucose = a neolactoside IV(2)-alpha-Fuc-nLc4Cer + GDP + H(+). The catalysed reaction is a neolactoside nLc4Cer(d18:1(4E)) + GDP-beta-L-fucose = a neolactoside IV(2)-alpha-Fuc-nLc4Cer(d18:1(4E)) + GDP + H(+). It carries out the reaction a ganglioside GM1 + GDP-beta-L-fucose = a ganglioside Fuc-GM1 + GDP + H(+). It catalyses the reaction a ganglioside GA1 + GDP-beta-L-fucose = a ganglioside Fuc-GA1 + GDP + H(+). The enzyme catalyses Lc4Cer + GDP-beta-L-fucose = alpha-L-fucosyl-(1-&gt;2)-beta-D-galactosyl-(1-&gt;3)-N-acetyl-beta-D-glucosaminyl-(1-&gt;3)-beta-D-galactosyl-(1-&gt;4)-beta-D-glucosyl-(1&lt;-&gt;1')-ceramide + GDP + H(+). The catalysed reaction is a beta-D-Gal-(1-&gt;3)-beta-D-GlcNAc-(1-&gt;3)-beta-D-Gal-(1-&gt;4)-beta-D-Glc-(1&lt;-&gt;1')-Cer(d18:1(4E)) + GDP-beta-L-fucose = alpha-L-fucosyl-(1-&gt;2)- beta-D-galactosyl-(1-&gt;3)-N-acetyl-beta-D-glucosaminyl-(1-&gt;3)-beta-D-galactosyl-(1-&gt;4)-beta-D-glucosyl-(1&lt;-&gt;1')-N-acylsphing-4-enine + GDP + H(+). It carries out the reaction a ganglioside GD1b + GDP-beta-L-fucose = a ganglioside Fuc-GD1b + GDP + H(+). It catalyses the reaction a ganglioside GM1 (d18:1(4E)) + GDP-beta-L-fucose = a ganglioside Fuc-GM1 (d18:1(4E)) + GDP + H(+). The enzyme catalyses a globoside GalGb4Cer (d18:1(4E)) + GDP-beta-L-fucose = a globoside Globo-H (d18:1(4E)) + GDP + H(+). The catalysed reaction is a lactoside III(4)-a-Fuc-Lc4Cer + GDP-beta-L-fucose = a lactoside IV(2),III(4)-a-[Fuc]2-Lc4Cer + GDP + H(+). It carries out the reaction beta-D-galactosyl-(1-&gt;3)-N-acetyl-D-galactosamine + GDP-beta-L-fucose = alpha-L-fucosyl-(1-&gt;2)-beta-D-galactosyl-(1-&gt;3)-N-acetyl-D-galactosamine + GDP + H(+). It participates in protein modification; protein glycosylation. In terms of biological role, catalyzes the transfer of L-fucose, from a guanosine diphosphate-beta-L-fucose, to the terminal galactose on both O- and N-linked glycans chains of cell surface glycoproteins and glycolipids and the resulting epitope regulates several processes such as cell-cell interaction including host-microbe interaction, cell surface expression and cell proliferation. Preferentially fucosylates gangliosides GA1 and GM1 in the antrum, cecum and colon and in the female reproductive organs. Fucosylated host glycoproteins or glycolipids mediate interaction with intestinal microbiota influencing its composition. Creates a soluble precursor oligosaccharide FuC-alpha ((1,2)Galbeta-) called the H antigen which is an essential substrate for the final step in the soluble ABO blood group antigen synthesis pathway. This is Galactoside alpha-(1,2)-fucosyltransferase 2 from Oryctolagus cuniculus (Rabbit).